Reading from the N-terminus, the 152-residue chain is MMKKIDVKILDPRVRKEFPLPTYATSGSAGLDLRACLDDAVELAPGDTTLVPTGLAIHIADPSLAAMMLPRSGLGHKHGIVLGNLVGLIDSDYQGQLMISVWNRGQDSFTIQPGERIAQMIFVPVVQAEFNLVEDFDATDRGEGGFGHSGRQ.

Substrate contacts are provided by residues R71–G73, N84, L88–D90, and M98.

This sequence belongs to the dUTPase family. Mg(2+) is required as a cofactor.

The catalysed reaction is dUTP + H2O = dUMP + diphosphate + H(+). The protein operates within pyrimidine metabolism; dUMP biosynthesis; dUMP from dCTP (dUTP route): step 2/2. In terms of biological role, this enzyme is involved in nucleotide metabolism: it produces dUMP, the immediate precursor of thymidine nucleotides and it decreases the intracellular concentration of dUTP so that uracil cannot be incorporated into DNA. The sequence is that of Deoxyuridine 5'-triphosphate nucleotidohydrolase from Shigella flexneri.